Consider the following 392-residue polypeptide: MTTQFACSGIELELFRYPSQQASNLQAWDAADEHLVKYLIDTEITATTTAILNDNFGALTCALTMQYPHSELLVETDAKTSLLGYQQNLLHNKLASTNIHWLNSRETLPQNIQLVLMKLPKNLHYFGQQLARLSTVLPAGTQILIGAKAKSINPALLASIEKNLGPASASLAWKKTRVISCISDGKKRSLAKAVSWNVDELKLTISNLANVFAANKLDIGARIMLDNMPKGEFKHIIDLGCGNGILGLHAKQCYPNAQIHFVDDSDMAIASAKHNWQANELDTPSQDLQSQDPQTEQMPQAFFHWDDCLSNLPADVEPDLVICNPPFHQGEAITDHIAWQMFVDAHKRLKKGGLLHIVGNRHLAYHVKINRIFKNCTTVASNGKFVILQAIK.

The protein belongs to the methyltransferase superfamily. RlmG family.

The protein localises to the cytoplasm. The enzyme catalyses guanosine(1835) in 23S rRNA + S-adenosyl-L-methionine = N(2)-methylguanosine(1835) in 23S rRNA + S-adenosyl-L-homocysteine + H(+). Specifically methylates the guanine in position 1835 (m2G1835) of 23S rRNA. This is Ribosomal RNA large subunit methyltransferase G from Shewanella frigidimarina (strain NCIMB 400).